Here is a 415-residue protein sequence, read N- to C-terminus: Serine hydroxymethyltransferase (415 aa).

Residues L117 and 121–123 (GHL) contribute to the (6S)-5,6,7,8-tetrahydrofolate site. K226 is modified (N6-(pyridoxal phosphate)lysine). Residues E241 and 349-351 (SPF) each bind (6S)-5,6,7,8-tetrahydrofolate.

The protein belongs to the SHMT family. In terms of assembly, homodimer. Pyridoxal 5'-phosphate is required as a cofactor.

The protein localises to the cytoplasm. It carries out the reaction (6R)-5,10-methylene-5,6,7,8-tetrahydrofolate + glycine + H2O = (6S)-5,6,7,8-tetrahydrofolate + L-serine. Its pathway is one-carbon metabolism; tetrahydrofolate interconversion. It functions in the pathway amino-acid biosynthesis; glycine biosynthesis; glycine from L-serine: step 1/1. Catalyzes the reversible interconversion of serine and glycine with tetrahydrofolate (THF) serving as the one-carbon carrier. This reaction serves as the major source of one-carbon groups required for the biosynthesis of purines, thymidylate, methionine, and other important biomolecules. Also exhibits THF-independent aldolase activity toward beta-hydroxyamino acids, producing glycine and aldehydes, via a retro-aldol mechanism. The chain is Serine hydroxymethyltransferase from Geobacter metallireducens (strain ATCC 53774 / DSM 7210 / GS-15).